The primary structure comprises 544 residues: MAKDIKFSEEARRAMLRGVDALADAVKVTLGPKGRNVVLEKKFGSPLITNDGVTIAKEIELEDAFENMGAKLVAEVASKTNDVAGDGTTTATVLAQAMIREGLKNVTAGANPVGVRKGMEQAVTVAIENLKEISKPIEGKESIAQVAAISAADEEVGSLIAEAMERVGNDGVITIEESKGFTTELEVVEGMQFDRGYASPYMVTDSDKMEAVLDNPYILITDKKITNIQEILPVLEQVVQQGKPLLLIAEDVEGEALATLVVNKLRGTFNAVAVKAPGFGDRRKAMLEDISVLTGGEVITEDLGLDLKSTEIGQLGRASKVVVTKENTTIVEGAGDTEKIAARVNQIRAQVEETTSEFDREKLQERLAKLAGGVAVIKVGAATETELKERKLRIEDALNSTRAAVEEGIVSGGGTALVNVYNKVAAVEAEGDAQTGINIVLRALEEPIRQIAHNAGLEGSVIVERLKNEKIGVGFNAATGEWVNMIEKGIVDPTKVTRSALQNAASVAAMLLTTEAVVADKPEENAGGAGMPDMGGMGGMGGMM.

ATP-binding positions include 29 to 32 (TLGP), 86 to 90 (DGTTT), glycine 413, 476 to 478 (NAA), and aspartate 492.

Belongs to the chaperonin (HSP60) family. In terms of assembly, forms a cylinder of 14 subunits composed of two heptameric rings stacked back-to-back. Interacts with the co-chaperonin GroES.

It localises to the cytoplasm. It catalyses the reaction ATP + H2O + a folded polypeptide = ADP + phosphate + an unfolded polypeptide.. Functionally, together with its co-chaperonin GroES, plays an essential role in assisting protein folding. The GroEL-GroES system forms a nano-cage that allows encapsulation of the non-native substrate proteins and provides a physical environment optimized to promote and accelerate protein folding. This chain is Chaperonin GroEL, found in Bacillus velezensis (strain DSM 23117 / BGSC 10A6 / LMG 26770 / FZB42) (Bacillus amyloliquefaciens subsp. plantarum).